Here is a 73-residue protein sequence, read N- to C-terminus: Small ribosomal subunit protein bS18c (73 aa).

Belongs to the bacterial ribosomal protein bS18 family. As to quaternary structure, part of the 30S ribosomal subunit.

It localises to the plastid. The protein localises to the chloroplast. This Rhodomonas salina (Cryptomonas salina) protein is Small ribosomal subunit protein bS18c.